A 142-amino-acid chain; its full sequence is Large ribosomal subunit protein uL13 (142 aa).

It belongs to the universal ribosomal protein uL13 family. In terms of assembly, part of the 50S ribosomal subunit.

Its function is as follows. This protein is one of the early assembly proteins of the 50S ribosomal subunit, although it is not seen to bind rRNA by itself. It is important during the early stages of 50S assembly. This is Large ribosomal subunit protein uL13 from Actinobacillus succinogenes (strain ATCC 55618 / DSM 22257 / CCUG 43843 / 130Z).